A 221-amino-acid polypeptide reads, in one-letter code: Eukaryotic translation initiation factor NCBP (221 aa).

It belongs to the eukaryotic initiation factor 4E family. As to quaternary structure, EIF4F is a multi-subunit complex, the composition of which varies with external and internal environmental conditions. It is composed of at least EIF4A, EIF4E and EIF4G. EIF4E is also known to interact with other partners. In higher plants two isoforms of EIF4F have been identified, named isoform EIF4F and isoform EIF(iso)4F. Isoform EIF4F has subunits p220 and p26, whereas isoform EIF(iso)4F has subunits p82 and p28.

Recognizes and binds the 7-methylguanosine-containing mRNA cap during an early step in the initiation of protein synthesis and facilitates ribosome binding by inducing the unwinding of the mRNAs secondary structures. This chain is Eukaryotic translation initiation factor NCBP (NCBP), found in Arabidopsis thaliana (Mouse-ear cress).